Consider the following 605-residue polypeptide: Probable Xaa-Pro aminopeptidase P (605 aa).

Positions 402, 413, 511, and 525 each coordinate Mn(2+).

This sequence belongs to the peptidase M24B family. Requires Mn(2+) as cofactor.

The catalysed reaction is Release of any N-terminal amino acid, including proline, that is linked to proline, even from a dipeptide or tripeptide.. Its function is as follows. Catalyzes the removal of a penultimate prolyl residue from the N-termini of peptides. This is Probable Xaa-Pro aminopeptidase P (AMPP) from Leptosphaeria maculans (strain JN3 / isolate v23.1.3 / race Av1-4-5-6-7-8) (Blackleg fungus).